The chain runs to 200 residues: Cysteine dioxygenase type 1 (200 aa).

Residues H86, H88, and H140 each contribute to the Fe cation site. The 3'-(S-cysteinyl)-tyrosine (Cys-Tyr) cross-link spans 93 to 157 (CFLKLLQGNL…TEPAVSLHLY (65 aa)).

It belongs to the cysteine dioxygenase family. In terms of assembly, monomer. Fe(2+) serves as cofactor. Ni(2+) is required as a cofactor. Requires Zn(2+) as cofactor. The thioether cross-link between Cys-93 and Tyr-157 plays a structural role through stabilizing the Fe(2+) ion, and prevents the production of highly damaging free hydroxyl radicals by holding the oxygen radical via hydroxyl hydrogen. Highest expression in liver. Also expressed in kidney, lung, brain and small intestine.

It carries out the reaction L-cysteine + O2 = 3-sulfino-L-alanine + H(+). It participates in organosulfur biosynthesis; taurine biosynthesis; hypotaurine from L-cysteine: step 1/2. Catalyzes the oxidation of cysteine to cysteine sulfinic acid with addition of molecular dioxygen. This chain is Cysteine dioxygenase type 1 (Cdo1), found in Mus musculus (Mouse).